The primary structure comprises 66 residues: DNA-directed RNA polymerase subunit Rpo10 (66 aa).

Cys-7, Cys-10, Cys-44, and Cys-45 together coordinate Zn(2+).

Belongs to the archaeal Rpo10/eukaryotic RPB10 RNA polymerase subunit family. As to quaternary structure, part of the 13-subunit RNA polymerase complex. Zn(2+) is required as a cofactor.

It is found in the cytoplasm. The catalysed reaction is RNA(n) + a ribonucleoside 5'-triphosphate = RNA(n+1) + diphosphate. Its function is as follows. DNA-dependent RNA polymerase (RNAP) catalyzes the transcription of DNA into RNA using the four ribonucleoside triphosphates as substrates. The protein is DNA-directed RNA polymerase subunit Rpo10 of Sulfolobus acidocaldarius (strain ATCC 33909 / DSM 639 / JCM 8929 / NBRC 15157 / NCIMB 11770).